Here is a 287-residue protein sequence, read N- to C-terminus: uncharacterized protein (287 aa).

The signal sequence occupies residues 1–31 (MLGSMALKLRKWIWASIPSLALILSSCSALV).

The protein belongs to the MG439/MG440 family.

This is an uncharacterized protein from Mycoplasma pneumoniae (strain ATCC 29342 / M129 / Subtype 1) (Mycoplasmoides pneumoniae).